The following is a 368-amino-acid chain: SH3 domain-containing protein 2 (368 aa).

Coiled coils occupy residues 1–21 and 146–210; these read MDAI…QQQA and LEDA…LGKE. In terms of domain architecture, BAR spans 1–264; the sequence is MDAIRKQASR…MVSERQRIEA (264 aa). The disordered stretch occupies residues 258-281; sequence ERQRIEAPSTPSSADSMPPPPSYE. The SH3 domain occupies 299-358; the sequence is MGYFLGEVLFPYHGVTDVELSLSTGEYVVVRKVTGSGWAEGECKGKAGWFPYGYIERRER.

As to quaternary structure, homodimer. Interacts with FREE1. Interacts (via SH3 domain) with ATG8E and ATG8F. Component of a phosphoinositide 3-kinase (PI3K) complex containing ATG6, SH3P2 and FREE1. Binds to SH3P3 and DRP1A. Forms a complex made of SH3P2 and DRP1A and triggers its accumulation at the cell plate. In terms of tissue distribution, highly expressed in seedlings. Detected in flowers, leaves and stems.

The protein localises to the cytoplasm. The protein resides in the cytoplasmic vesicle. It is found in the clathrin-coated vesicle. Its subcellular location is the cell membrane. It localises to the late endosome. The protein localises to the autophagosome membrane. Functionally, regulator for autophaosome formation and/or maturation. Binds phosphatidylinositol-phosphate; highest affinity for vesicles containing PtdIns(3,4,5)P(3), followed by those containing PtdIns(4,5)P(2) and PtdIns(3,4)P(2), with minimal binding to phosphatidylinositol monophosphates, including PtdIns(3)P. Together with DRP1A, converts the fused vesicles to tubular structures at the cell plate during cytokinesis. This chain is SH3 domain-containing protein 2, found in Arabidopsis thaliana (Mouse-ear cress).